We begin with the raw amino-acid sequence, 466 residues long: Gastric inhibitory polypeptide receptor (466 aa).

A signal peptide spans 1 to 21; the sequence is MTTSPILQLLLRLSLCGLLLQ. Topologically, residues 22 to 138 are extracellular; sequence RAETGSKGQT…DQRLILERLQ (117 aa). 3 disulfide bridges follow: cysteine 46-cysteine 70, cysteine 61-cysteine 103, and cysteine 84-cysteine 118. 2 N-linked (GlcNAc...) asparagine glycosylation sites follow: asparagine 62 and asparagine 77. A helical membrane pass occupies residues 139–161; sequence VMYTVGYSLSLATLLLALLILSL. At 162 to 169 the chain is on the cytoplasmic side; that stretch reads FRRLHCTR. Residues 170-189 traverse the membrane as a helical segment; the sequence is NYIHINLFTSFMLRAAAILS. Residues 190-217 lie on the Extracellular side of the membrane; it reads RDRLLPRPGPYLGDQALALWNQALAACR. Residues 218–242 form a helical membrane-spanning segment; that stretch reads TAQIVTQYCVGANYTWLLVEGVYLH. Residues 243-254 lie on the Cytoplasmic side of the membrane; that stretch reads SLLVLVGGSEEG. The helical transmembrane segment at 255-278 threads the bilayer; that stretch reads HFRYYLLLGWGAPALFVIPWVIVR. Residues 279–293 are Extracellular-facing; sequence YLYENTQCWERNEVK. The chain crosses the membrane as a helical span at residues 294–319; that stretch reads AIWWIIRTPILMTILINFLIFIRILG. Over 320–341 the chain is Cytoplasmic; that stretch reads ILLSKLRTRQMRCRDYRLRLAR. Residues 342-362 traverse the membrane as a helical segment; that stretch reads STLTLVPLLGVHEVVFAPVTE. Topologically, residues 363–377 are extracellular; that stretch reads EQARGALRFAKLGFE. A helical membrane pass occupies residues 378-398; sequence IFLSSFQGFLVSVLYCFINKE. Residues 399-466 lie on the Cytoplasmic side of the membrane; it reads VQSEIRRGWH…EASRELESYC (68 aa). A disordered region spans residues 427 to 466; it reads AFRALPSGSGPGEVPTSRGLSSGTLPGPGNEASRELESYC.

This sequence belongs to the G-protein coupled receptor 2 family. In terms of assembly, may form homodimers and heterodimers with GLP1R. N-glycosylation is required for cell surface expression and lengthens receptor half-life by preventing degradation in the ER.

It is found in the cell membrane. In terms of biological role, this is a receptor for GIP. The activity of this receptor is mediated by G proteins which activate adenylyl cyclase. This is Gastric inhibitory polypeptide receptor (GIPR) from Homo sapiens (Human).